Here is a 207-residue protein sequence, read N- to C-terminus: uncharacterized protein (207 aa).

The N-terminal stretch at 1-19 is a signal peptide; sequence MRFNVSFLLSLLLPTLAFA.

This sequence to P.multocida PM1509.

This is an uncharacterized protein from Pasteurella multocida (strain Pm70).